The chain runs to 758 residues: Vitamin K-dependent gamma-carboxylase (758 aa).

Residues Met-1–Ala-22 are disordered. Residue Ala-2 is modified to N-acetylalanine. Topologically, residues Ala-2–Asp-60 are cytoplasmic. A helical transmembrane segment spans residues Pro-61–Gln-81. The Lumenal portion of the chain corresponds to Glu-82–Asp-113. An intrachain disulfide couples Cys-99 to Cys-450. Residues Trp-114–Cys-134 traverse the membrane as a helical segment. Residues Tyr-135–Arg-136 lie on the Cytoplasmic side of the membrane. The chain crosses the membrane as a helical span at residues Ile-137–Trp-157. Residues Asn-158–Gln-292 lie on the Lumenal side of the membrane. Residue Lys-218 is the Proton acceptor of the active site. The helical transmembrane segment at Leu-293–Pro-313 threads the bilayer. Topologically, residues Glu-314–Gln-361 are cytoplasmic. The chain crosses the membrane as a helical span at residues Leu-362–Phe-382. Residues Leu-383 to Phe-758 lie on the Lumenal side of the membrane. N-linked (GlcNAc...) asparagine glycans are attached at residues Asn-459 and Asn-550. The tract at residues Gly-732–Phe-758 is disordered. The span at Asn-735–Pro-747 shows a compositional bias: polar residues.

It belongs to the vitamin K-dependent gamma-carboxylase family. As to quaternary structure, monomer. May interact with CALU.

It localises to the endoplasmic reticulum membrane. It carries out the reaction 4-carboxy-L-glutamyl-[protein] + 2,3-epoxyphylloquinone + H2O + H(+) = phylloquinol + L-glutamyl-[protein] + CO2 + O2. Mediates the vitamin K-dependent carboxylation of glutamate residues to calcium-binding gamma-carboxyglutamate (Gla) residues with the concomitant conversion of the reduced hydroquinone form of vitamin K to vitamin K epoxide. Catalyzes gamma-carboxylation of various proteins, such as blood coagulation factors (F2, F7, F9 and F10), osteocalcin (BGLAP) or matrix Gla protein (MGP). This Homo sapiens (Human) protein is Vitamin K-dependent gamma-carboxylase (GGCX).